The chain runs to 1887 residues: Bifunctional serine/threonine-protein kinase/NEDD4-like E3 ubiquitin-protein ligase (1887 aa).

2 disordered regions span residues 19 to 55 (TPQV…TTNF) and 72 to 98 (TDNY…TKEN). Low complexity-rich tracts occupy residues 26-54 (NNSN…STTN) and 72-97 (TDNY…NTKE). RCC1 repeat units follow at residues 206 to 260 (QGNL…ALTI), 262 to 314 (GKVY…NNNN), 356 to 409 (KGLL…VLTN), 411 to 470 (GLVF…AISD), 472 to 528 (NDTY…AMSI), and 529 to 581 (DGSL…IVEK). Residues 299-333 (NNNNNNNNNNSTNNNNNNNNDGAQQQFSLSQNSSS) are disordered. Disordered regions lie at residues 594-619 (LPSS…SDSN), 823-858 (VLVH…KNGT), and 1030-1088 (DDDN…NNNN). Basic and acidic residues predominate over residues 825-839 (VHQDEKQQQREKSET). Positions 840–852 (ELEEEQDEEEEDS) are enriched in acidic residues. Positions 1036 to 1088 (ENNSVNNNSNNNNNNNNNNNNNNNNNNNNNNNIDNNINSNSINDSSNNNNNNN) are enriched in low complexity. In terms of domain architecture, Protein kinase spans 1158-1437 (YDIIKTLSTH…AHQIAVHPYF (280 aa)). Residues 1164–1172 (LSTHPHNVY) and Lys-1184 contribute to the ATP site. Catalysis depends on Asp-1281, which acts as the Proton acceptor. Residues 1501 to 1887 (ESNKLFCRLE…LEYVDGFAFI (387 aa)) form the HECT domain. Positions 1586–1628 (NNNNNNEENNNNNNNNNNNNNNNNNNNNNNNNNNNNNNNNNEE) are disordered. Cys-1855 acts as the Glycyl thioester intermediate in catalysis.

This sequence in the N-terminal section; belongs to the protein kinase superfamily. Ser/Thr protein kinase family. It in the C-terminal section; belongs to the protein kinase superfamily. CAMK Ser/Thr protein kinase family.

The enzyme catalyses L-seryl-[protein] + ATP = O-phospho-L-seryl-[protein] + ADP + H(+). The catalysed reaction is L-threonyl-[protein] + ATP = O-phospho-L-threonyl-[protein] + ADP + H(+). It catalyses the reaction S-ubiquitinyl-[E2 ubiquitin-conjugating enzyme]-L-cysteine + [acceptor protein]-L-lysine = [E2 ubiquitin-conjugating enzyme]-L-cysteine + N(6)-ubiquitinyl-[acceptor protein]-L-lysine.. It participates in protein modification; protein ubiquitination. The polypeptide is Bifunctional serine/threonine-protein kinase/NEDD4-like E3 ubiquitin-protein ligase (Dictyostelium discoideum (Social amoeba)).